The sequence spans 297 residues: ER membrane protein complex subunit 2-A (297 aa).

TPR repeat units lie at residues 87–120 (HRVK…DPTN), 155–188 (QEAW…NPHN), and 192–225 (YQQF…NNHN).

The protein belongs to the EMC2 family. In terms of assembly, component of the ER membrane protein complex (EMC).

It localises to the endoplasmic reticulum membrane. In terms of biological role, part of the endoplasmic reticulum membrane protein complex (EMC) that enables the energy-independent insertion into endoplasmic reticulum membranes of newly synthesized membrane proteins. Preferentially accommodates proteins with transmembrane domains that are weakly hydrophobic or contain destabilizing features such as charged and aromatic residues. Involved in the cotranslational insertion of multi-pass membrane proteins in which stop-transfer membrane-anchor sequences become ER membrane spanning helices. It is also required for the post-translational insertion of tail-anchored/TA proteins in endoplasmic reticulum membranes. By mediating the proper cotranslational insertion of N-terminal transmembrane domains in an N-exo topology, with translocated N-terminus in the lumen of the ER, controls the topology of multi-pass membrane proteins. By regulating the insertion of various proteins in membranes, it is indirectly involved in many cellular processes. In Xenopus laevis (African clawed frog), this protein is ER membrane protein complex subunit 2-A (emc2-a).